The sequence spans 352 residues: Protein RecA (352 aa).

65–72 contacts ATP; sequence GPESSGKT.

The protein belongs to the RecA family.

It is found in the cytoplasm. Functionally, can catalyze the hydrolysis of ATP in the presence of single-stranded DNA, the ATP-dependent uptake of single-stranded DNA by duplex DNA, and the ATP-dependent hybridization of homologous single-stranded DNAs. It interacts with LexA causing its activation and leading to its autocatalytic cleavage. The chain is Protein RecA from Pseudomonas fluorescens (strain Pf0-1).